The following is a 287-amino-acid chain: AA9 family lytic polysaccharide monooxygenase C (287 aa).

The N-terminal stretch at 1 to 16 (MKSVLVALATATAVSA) is a signal peptide. Residue His17 coordinates Cu(2+). An N-linked (GlcNAc...) asparagine glycan is attached at Asn22. 2 disulfides stabilise this stretch: Cys77–Cys230 and Cys200–Cys284. His114 serves as a coordination point for Cu(2+). Residues His216 and Gln225 each contribute to the O2 site. Residue Tyr227 coordinates Cu(2+).

The protein belongs to the polysaccharide monooxygenase AA9 family. Cu(2+) serves as cofactor.

It is found in the secreted. The enzyme catalyses [(1-&gt;4)-beta-D-glucosyl]n+m + reduced acceptor + O2 = 4-dehydro-beta-D-glucosyl-[(1-&gt;4)-beta-D-glucosyl]n-1 + [(1-&gt;4)-beta-D-glucosyl]m + acceptor + H2O.. In terms of biological role, lytic polysaccharide monooxygenase (LPMO) that depolymerizes crystalline and amorphous polysaccharides via the oxidation of scissile alpha- or beta-(1-4)-glycosidic bonds, yielding C1 or C4 oxidation products. Catalysis by LPMOs requires the reduction of the active-site copper from Cu(II) to Cu(I) by a reducing agent and H(2)O(2) or O(2) as a cosubstrate. The sequence is that of AA9 family lytic polysaccharide monooxygenase C from Podospora anserina (strain S / ATCC MYA-4624 / DSM 980 / FGSC 10383) (Pleurage anserina).